The sequence spans 158 residues: Cyclic pyranopterin monophosphate synthase (158 aa).

Residues 76–78 (LCH) and 114–115 (ME) contribute to the substrate site. Asp129 is an active-site residue.

This sequence belongs to the MoaC family. In terms of assembly, homohexamer; trimer of dimers.

It carries out the reaction (8S)-3',8-cyclo-7,8-dihydroguanosine 5'-triphosphate = cyclic pyranopterin phosphate + diphosphate. The protein operates within cofactor biosynthesis; molybdopterin biosynthesis. In terms of biological role, catalyzes the conversion of (8S)-3',8-cyclo-7,8-dihydroguanosine 5'-triphosphate to cyclic pyranopterin monophosphate (cPMP). This Shewanella sediminis (strain HAW-EB3) protein is Cyclic pyranopterin monophosphate synthase.